A 164-amino-acid chain; its full sequence is Glutaredoxin-2, mitochondrial (164 aa).

A mitochondrion-targeting transit peptide spans Met-1 to Gly-19. At Ser-20 the chain carries Phosphoserine. Residues Val-57–Lys-157 enclose the Glutaredoxin domain. Cys-68 contributes to the [2Fe-2S] cluster binding site. Lys-74 is a binding site for glutathione. Cys-77 is subject to S-glutathionyl cysteine; alternate. Cys-77 and Cys-80 form a disulfide bridge. Glutathione is bound by residues Gln-109 and Val-121. Cys-153 provides a ligand contact to [2Fe-2S] cluster.

The protein belongs to the glutaredoxin family. In terms of assembly, monomer; active form. Homodimer; inactive form. The homodimer is probably linked by 1 2Fe-2S cluster. In terms of tissue distribution, widely expressed. Expressed in brain, heart, skeletal muscle, colon, thymus, spleen, kidney, liver, small intestine, placenta and lung. Not expressed in peripheral blood leukocytes.

It localises to the mitochondrion. The protein localises to the nucleus. The 2Fe-2S present in the homodimer leads to inactivation of the enzyme. The 2Fe-2S may serve as a redox sensor: the presence of one-electron oxidants or reductants leading to the loss of the 2Fe-2S cluster, subsequent monomerization and activation of the enzyme. Unlike other glutaredoxins, it is not inhibited by oxidation of structural Cys residues. Its function is as follows. Glutathione-dependent oxidoreductase that facilitates the maintenance of mitochondrial redox homeostasis upon induction of apoptosis by oxidative stress. Involved in response to hydrogen peroxide and regulation of apoptosis caused by oxidative stress. Acts as a very efficient catalyst of monothiol reactions because of its high affinity for protein glutathione-mixed disulfides. Can receive electrons not only from glutathione (GSH), but also from thioredoxin reductase supporting both monothiol and dithiol reactions. Efficiently catalyzes both glutathionylation and deglutathionylation of mitochondrial complex I, which in turn regulates the superoxide production by the complex. Overexpression decreases the susceptibility to apoptosis and prevents loss of cardiolipin and cytochrome c release. This is Glutaredoxin-2, mitochondrial (GLRX2) from Homo sapiens (Human).